The primary structure comprises 387 residues: 8-amino-7-oxononanoate synthase (387 aa).

Arg20 contacts substrate. Residue 107 to 108 (GY) participates in pyridoxal 5'-phosphate binding. His132 contributes to the substrate binding site. Residues Ser181, His209, and Thr238 each contribute to the pyridoxal 5'-phosphate site. Lys241 carries the post-translational modification N6-(pyridoxal phosphate)lysine. Position 355 (Thr355) interacts with substrate.

This sequence belongs to the class-II pyridoxal-phosphate-dependent aminotransferase family. BioF subfamily. Homodimer. The cofactor is pyridoxal 5'-phosphate.

It catalyses the reaction 6-carboxyhexanoyl-[ACP] + L-alanine + H(+) = (8S)-8-amino-7-oxononanoate + holo-[ACP] + CO2. It functions in the pathway cofactor biosynthesis; biotin biosynthesis. Its function is as follows. Catalyzes the decarboxylative condensation of pimeloyl-[acyl-carrier protein] and L-alanine to produce 8-amino-7-oxononanoate (AON), [acyl-carrier protein], and carbon dioxide. In Dechloromonas aromatica (strain RCB), this protein is 8-amino-7-oxononanoate synthase.